A 204-amino-acid polypeptide reads, in one-letter code: Casparian strip membrane protein 2 (204 aa).

Over 1–42 (MKNESTFIDVPAESSSAMKGKAPLIGVARDHTTSGSGGYNRG) the chain is Cytoplasmic. A helical transmembrane segment spans residues 43–63 (LAIFDFLLRLAAIVAALAAAA). Over 64–92 (TMGTSDETLPFFTQFLQFEASYDDLPTFQ) the chain is Extracellular. A helical transmembrane segment spans residues 93–113 (FFVIAMALVGGYLVLSLPISV). Over 114-125 (VTILRPLATAPR) the chain is Cytoplasmic. The chain crosses the membrane as a helical span at residues 126-146 (LLLLVLDTGVLALNTAAASSA). Topologically, residues 147 to 178 (AAISYLAHSGNQNTNWLPICQQFGDFCQKSSG) are extracellular. The helical transmembrane segment at 179-199 (AVVSAFVSVVFFTILVVISGV) threads the bilayer. Residues 200–204 (ALKRH) are Cytoplasmic-facing.

This sequence belongs to the Casparian strip membrane proteins (CASP) family. In terms of assembly, homodimer and heterodimers with other CASP proteins. Interacts with CASP1, CASP3 and CASP4.

The protein resides in the cell membrane. Functionally, regulates membrane-cell wall junctions and localized cell wall deposition. Required for establishment of the Casparian strip membrane domain (CSD) and the subsequent formation of Casparian strips, a cell wall modification of the root endodermis that determines an apoplastic barrier between the intraorganismal apoplasm and the extraorganismal apoplasm and prevents lateral diffusion. This Arabidopsis thaliana (Mouse-ear cress) protein is Casparian strip membrane protein 2 (CASP2).